We begin with the raw amino-acid sequence, 260 residues long: Hydroxyethylthiazole kinase 1 (260 aa).

Met-39 contacts substrate. ATP-binding residues include Arg-115 and Thr-160. Gly-187 contributes to the substrate binding site.

Belongs to the Thz kinase family. Mg(2+) is required as a cofactor.

It catalyses the reaction 5-(2-hydroxyethyl)-4-methylthiazole + ATP = 4-methyl-5-(2-phosphooxyethyl)-thiazole + ADP + H(+). It functions in the pathway cofactor biosynthesis; thiamine diphosphate biosynthesis; 4-methyl-5-(2-phosphoethyl)-thiazole from 5-(2-hydroxyethyl)-4-methylthiazole: step 1/1. Functionally, catalyzes the phosphorylation of the hydroxyl group of 4-methyl-5-beta-hydroxyethylthiazole (THZ). This chain is Hydroxyethylthiazole kinase 1, found in Streptococcus pneumoniae (strain Hungary19A-6).